The chain runs to 232 residues: MRIVGLTGGIASGKSTVSNLFKASGIPVVDADVVARDVLKKGSGGWKRVVAAFGEEILLPSGEVDRPKLGQIVFSSDSKRQLLNKLMAPYISSGIFWEILKQWASGAKVIVVDIPLLFEVKMDKWTKPIVVVWVSQETQLKRLMERDGLSEEDARNRVMAQMPLDSKRSKADVVIDNNGSLDDLHQQFEKVLIEIRRPLTWIEFWRSRQGAFSVLGSVILGLSVCKQLKIGS.

The region spanning I3–R206 is the DPCK domain. G8 to S15 contacts ATP.

This sequence belongs to the CoaE family.

The protein resides in the peroxisome. The enzyme catalyses 3'-dephospho-CoA + ATP = ADP + CoA + H(+). It participates in cofactor biosynthesis; coenzyme A biosynthesis; CoA from (R)-pantothenate: step 5/5. Functionally, catalyzes the phosphorylation of the 3'-hydroxyl group of dephosphocoenzyme A to form coenzyme A. The polypeptide is Dephospho-CoA kinase (Arabidopsis thaliana (Mouse-ear cress)).